The chain runs to 257 residues: Leucine-rich repeat-containing protein 3 (257 aa).

The first 32 residues, 1–32, serve as a signal peptide directing secretion; it reads MGTVRPPRPSLLLVSTRESCLFLLFCLHLGAA. The LRRNT domain occupies 33–64; the sequence is CPQPCRCPDHAGAVAVFCSLRGLQEVPEDIPA. 4 LRR repeats span residues 65–86, 89–110, 114–135, and 136–157; these read NTVL…AFQH, RLRE…TFAG, GLRL…ALGK, and LSAK…QEAL. The helical transmembrane segment at 205 to 225 threads the bilayer; the sequence is VAMLVTMFGWFAMVIAYVVYY.

The protein belongs to the LRRC3 family. In terms of tissue distribution, widely expressed; detected in testis, lung, small intestine, breast, brain, heart, bone marrow, placenta, colon, fetal brain, liver, fetal liver, thymus, salivary gland, spinal cord, spleen, trachea and adrenal gland.

Its subcellular location is the membrane. This chain is Leucine-rich repeat-containing protein 3 (LRRC3), found in Homo sapiens (Human).